A 419-amino-acid chain; its full sequence is Putative zinc metalloprotease M6_Spy1682 (419 aa).

H18 contacts Zn(2+). The active site involves E19. H22 provides a ligand contact to Zn(2+). 4 helical membrane passes run L169 to V191, L301 to N323, L343 to I365, and A392 to W411. The PDZ domain maps to G175–K274.

This sequence belongs to the peptidase M50B family. The cofactor is Zn(2+).

It localises to the cell membrane. The polypeptide is Putative zinc metalloprotease M6_Spy1682 (Streptococcus pyogenes serotype M6 (strain ATCC BAA-946 / MGAS10394)).